Reading from the N-terminus, the 608-residue chain is Extracellular metalloproteinase 5 (608 aa).

The first 20 residues, 1–20 (MHGLLLAAAGLLSLPLHVIA), serve as a signal peptide directing secretion. The propeptide occupies 21-244 (HPQPSTNLAG…VHNVVDYVSH (224 aa)). Residue asparagine 285 is glycosylated (N-linked (GlcNAc...) asparagine). A Zn(2+)-binding site is contributed by histidine 427. Glutamate 428 is an active-site residue. A Zn(2+)-binding site is contributed by histidine 431. N-linked (GlcNAc...) asparagine glycosylation is present at asparagine 591.

It belongs to the peptidase M36 family. The cofactor is Zn(2+).

It localises to the secreted. In terms of biological role, secreted metalloproteinase probably acting as a virulence factor. This Trichophyton tonsurans (Scalp ringworm fungus) protein is Extracellular metalloproteinase 5 (MEP5).